Consider the following 245-residue polypeptide: D-aminoacyl-tRNA deacylase (245 aa).

This sequence belongs to the DtdA deacylase family. As to quaternary structure, monomer. Requires Zn(2+) as cofactor.

It carries out the reaction a D-aminoacyl-tRNA + H2O = a tRNA + a D-alpha-amino acid + H(+). It catalyses the reaction glycyl-tRNA(Ala) + H2O = tRNA(Ala) + glycine + H(+). D-aminoacyl-tRNA deacylase with broad substrate specificity. By recycling D-aminoacyl-tRNA to D-amino acids and free tRNA molecules, this enzyme counteracts the toxicity associated with the formation of D-aminoacyl-tRNA entities in vivo. This Ignicoccus hospitalis (strain KIN4/I / DSM 18386 / JCM 14125) protein is D-aminoacyl-tRNA deacylase.